Reading from the N-terminus, the 265-residue chain is uncharacterized protein (265 aa).

The chain crosses the membrane as a helical span at residues 1–21; it reads MAFNNSTIIIIIVIAFAFFLI. N-linked (GlcNAc...) asparagine; by host glycosylation is found at N74 and N142.

The protein resides in the host membrane. The protein localises to the virion. This is an uncharacterized protein from Acanthamoeba polyphaga mimivirus (APMV).